The sequence spans 192 residues: Ion-translocating oxidoreductase complex subunit B (192 aa).

Positions 1-26 (MNAIWIAVAAVSLLALAFGAILGYAS) are hydrophobic. In terms of domain architecture, 4Fe-4S spans 32–91 (EDDPVVEKIDEILPQSQCGQCGYPGCRPYAEAISCNGEKINRCAPGGEAVMLKIAELLNV). [4Fe-4S] cluster contacts are provided by cysteine 49, cysteine 52, cysteine 57, cysteine 74, cysteine 117, cysteine 120, cysteine 123, cysteine 127, cysteine 147, cysteine 150, cysteine 153, and cysteine 157. 2 4Fe-4S ferredoxin-type domains span residues 108-137 (MVAV…GATR) and 138-167 (AMHT…LQPV).

This sequence belongs to the 4Fe4S bacterial-type ferredoxin family. RnfB subfamily. As to quaternary structure, the complex is composed of six subunits: RsxA, RsxB, RsxC, RsxD, RsxE and RsxG. [4Fe-4S] cluster is required as a cofactor.

Its subcellular location is the cell inner membrane. Functionally, part of a membrane-bound complex that couples electron transfer with translocation of ions across the membrane. Required to maintain the reduced state of SoxR. The protein is Ion-translocating oxidoreductase complex subunit B of Escherichia coli O81 (strain ED1a).